Here is a 162-residue protein sequence, read N- to C-terminus: Austinoid biosynthesis clusters protein J (162 aa).

The protein belongs to the trt14 isomerase family. In terms of assembly, homodimer.

It participates in secondary metabolite biosynthesis; terpenoid biosynthesis. Its function is as follows. Part of the gene cluster B that mediates the biosynthesis of austinol and dehydroaustinol, two fungal meroterpenoids. The first step of the pathway is the synthesis of 3,5-dimethylorsellinic acid by the polyketide synthase ausA. 3,5-dimethylorsellinic acid is then prenylated by the polyprenyl transferase ausN. Further epoxidation by the FAD-dependent monooxygenase ausM and cyclization by the probable terpene cyclase ausL lead to the formation of protoaustinoid A. Protoaustinoid A is then oxidized to spiro-lactone preaustinoid A3 by the combined action of the FAD-binding monooxygenases ausB and ausC, and the dioxygenase ausE. Acid-catalyzed keto-rearrangement and ring contraction of the tetraketide portion of preaustinoid A3 by ausJ lead to the formation of preaustinoid A4. The aldo-keto reductase ausK, with the help of ausH, is involved in the next step by transforming preaustinoid A4 into isoaustinone which is in turn hydroxylated by the P450 monooxygenase ausI to form austinolide. Finally, the cytochrome P450 monooxygenase ausG modifies austinolide to austinol. Austinol can be further modified to dehydroaustinol which forms a diffusible complex with diorcinol that initiates conidiation. Due to genetic rearrangements of the clusters and the subsequent loss of some enzymes, the end products of the Emericella nidulans austinoid biosynthesis clusters are austinol and dehydroaustinol, even if additional enzymes, such as the O-acetyltransferase ausQ and the cytochrome P450 monooxygenase ausR are still functional. This is Austinoid biosynthesis clusters protein J from Emericella nidulans (strain FGSC A4 / ATCC 38163 / CBS 112.46 / NRRL 194 / M139) (Aspergillus nidulans).